The sequence spans 134 residues: Translation initiation factor 2 subunit beta (134 aa).

This sequence belongs to the eIF-2-beta/eIF-5 family. Heterotrimer composed of an alpha, a beta and a gamma chain.

Its function is as follows. eIF-2 functions in the early steps of protein synthesis by forming a ternary complex with GTP and initiator tRNA. This chain is Translation initiation factor 2 subunit beta, found in Pyrobaculum neutrophilum (strain DSM 2338 / JCM 9278 / NBRC 100436 / V24Sta) (Thermoproteus neutrophilus).